The following is a 224-amino-acid chain: Probable GTP-binding protein EngB (224 aa).

Positions 27 to 201 constitute an EngB-type G domain; sequence SGIEVAFAGR…DAIICQWLEQ (175 aa). GTP is bound by residues 35 to 42, 62 to 66, 80 to 83, 147 to 150, and 180 to 182; these read GRSNAGKS, GRTQL, DLPG, TKCD, and FSS. Residues serine 42 and threonine 64 each contribute to the Mg(2+) site. A disordered region spans residues 205 to 224; sequence EYELPEEDDFDDSDEFTEEE.

It belongs to the TRAFAC class TrmE-Era-EngA-EngB-Septin-like GTPase superfamily. EngB GTPase family. Requires Mg(2+) as cofactor.

Necessary for normal cell division and for the maintenance of normal septation. This chain is Probable GTP-binding protein EngB, found in Colwellia psychrerythraea (strain 34H / ATCC BAA-681) (Vibrio psychroerythus).